We begin with the raw amino-acid sequence, 396 residues long: Elongation factor Tu (396 aa).

One can recognise a tr-type G domain in the interval 10-205 (KPHVNIGTIG…AVDESIPDPV (196 aa)). The G1 stretch occupies residues 19 to 26 (GHVDHGKT). 19–26 (GHVDHGKT) serves as a coordination point for GTP. Threonine 26 serves as a coordination point for Mg(2+). Residues 62–66 (GITIN) are G2. The G3 stretch occupies residues 83-86 (DAPG). Residues 83–87 (DAPGH) and 138–141 (NKSD) contribute to the GTP site. Residues 138–141 (NKSD) are G4. The G5 stretch occupies residues 175-177 (SAL).

The protein belongs to the TRAFAC class translation factor GTPase superfamily. Classic translation factor GTPase family. EF-Tu/EF-1A subfamily. Monomer.

It is found in the cytoplasm. The catalysed reaction is GTP + H2O = GDP + phosphate + H(+). GTP hydrolase that promotes the GTP-dependent binding of aminoacyl-tRNA to the A-site of ribosomes during protein biosynthesis. This Mycobacterium marinum (strain ATCC BAA-535 / M) protein is Elongation factor Tu.